A 548-amino-acid chain; its full sequence is MASSSANKCRPLANFHPTVWGYHFLSYTHEITNQEKVEVDEYKETIRKMLVEAPEGSEQKLVLIDAMQRLGVAYHFDNEIETSIQNIFDASSKQNDNDNNLYVVSLRFRLVRQQGHYMSSDVFKQFINQDGKFKETLTNDVQGLLSLYEASHLRVRDEEILEEALTFTTTHLESTVSNLSNNNSLKAEVTEAFSQPIRMTLPRVGARKYISIYENNDAHNHLLLKFAKLDFNMLQKLHQRELSDLTRWWKDLDFANKYPYARDRLVECYFWILGVYFEPKYSRARKMMTKVIQMASFFDDTFDAYATFDELEPFNNAIQRWDINAIDSVPPYLRHAYQALLDIYSEMEQALAKEFKSDRVYYAKYEMKKLVRAYFKEAQWLNNDNHIPKYEEHMENAMVSAGYMMGATTCLVGVEEFISKETFEWMINEPLIVRASSLIARAMDDIVGHEVEQQREHGASLIECYMKDYGVSKQEAYVKFQKEVTNGWMDINREFFCPDVEVPKFVLERVLNFTRVINTLYKEKDEYTNSKGKFKNMIISLLVESVEI.

The Mg(2+) site is built by Asp299, Asp303, Asp444, and Glu452. A DDXXD motif motif is present at residues 299–303; that stretch reads DDTFD.

Belongs to the terpene synthase family. Tpsa subfamily. Requires Mg(2+) as cofactor. It depends on Mn(2+) as a cofactor. Mostly expressed in leaves, to a lower extent in stems, trichomes, flowers and roots and, at low levels, in fruits.

The enzyme catalyses (2E,6E)-farnesyl diphosphate = alpha-humulene + diphosphate. The catalysed reaction is (2E,6E)-farnesyl diphosphate = (-)-(E)-beta-caryophyllene + diphosphate. It carries out the reaction (2Z,6Z)-farnesyl diphosphate = beta-bisabolene + diphosphate. It catalyses the reaction (2E)-geranyl diphosphate = terpinolene + diphosphate. The enzyme catalyses (2E)-geranyl diphosphate = limonene + diphosphate. The catalysed reaction is (2E)-geranyl diphosphate = beta-myrcene + diphosphate. It carries out the reaction (2E)-geranyl diphosphate = (E)-beta-ocimene + diphosphate. It catalyses the reaction (2Z,6Z)-farnesyl diphosphate = gamma-curcumene + diphosphate. The enzyme catalyses (2Z,6Z)-farnesyl diphosphate = (Z)-gamma-bisabolene + diphosphate. It functions in the pathway secondary metabolite biosynthesis; terpenoid biosynthesis. Functionally, sesquiterpene synthase involved in the biosynthesis of volatile compounds. Mediates the conversion of (2E,6E)-farnesyl diphosphate (FPP) into (1E,4E,8E)-alpha-humulene and (-)-(E)-beta-caryophyllene, and of (2Z,6Z)-farnesyl diphosphate ((ZZ)-FPP) into beta-bisabolene, gamma-curcumene and (Z)-gamma-bisabolene. Can act with a low efficiency as a monoterpene synthase with geranyl diphosphate (GPP) as substrate, thus producing beta-myrcene, (E)-beta-ocimene, limonene and terpinolene. The protein is Sesquiterpene synthase 12 of Solanum lycopersicum (Tomato).